Here is a 313-residue protein sequence, read N- to C-terminus: MIHMRTGVIGVGHLGRFHAQKYAAISQLAGVFDENAERAAEVAAELRCRAFPSVDALLAEVDAVSIVTPTSTHFAVAEVAMQAGVHCLIEKPFTLDTEEADALIGMAQERHLVLAIGHIKRVHPAIQYLRQAGFGAPRYLEAERLAPFKPRSLDIDVIMDLMIHDLDLTLLLTGAEPVDVRAVGVAAVTDKADMATAWMTLNNGTVANLAASRVVREPARRMRIFWQDRYASVDFLNNTLHIYHRGAGTVPGIPGVRDEAVDLAKRDALAAEIEDFLNAIAAHRPVFCDGVAGRRVLAAALQVRVAVEAFLQR.

3 residues coordinate NAD(+): His-13, Leu-14, and Arg-38.

It belongs to the Gfo/Idh/MocA family. Exists in multiple oligomeric states.

It carries out the reaction UDP-N-acetyl-alpha-D-glucosamine + NAD(+) = UDP-2-acetamido-3-dehydro-2-deoxy-alpha-D-glucopyranose + NADH + H(+). Its pathway is bacterial outer membrane biogenesis; LPS lipid A biosynthesis. Functionally, oxidoreductase involved in the synthesis of 2,3-diamino-2,3-dideoxy-D-glucopyranose (GlcN3N), which is a component of lipid A in some species. Catalyzes the NAD(+)-dependent oxidation of the glucosamine 3-position of UDP-N-acetyl-glucosamine (UDP-GlcNAc) to a ketone moiety, forming UDP-2-acetamido-3-dehydro-2-deoxy-alpha-D-glucopyranose (UDP-3-oxo-GlcNAc). Is specific for UDP-GlcNAc, no activity is observed with UDP-glucose (UDP-Glc), UDP-glucoronic acid (UDP-GlcA), UDP-galactose (UDP-Gal) and UDP-N-acetylgalactosamine (UDP-GalNAc). Cannot use FAD(+) and NADP(+). The sequence is that of UDP-N-acetylglucosamine 3-dehydrogenase from Acidithiobacillus ferrooxidans (strain ATCC 23270 / DSM 14882 / CIP 104768 / NCIMB 8455) (Ferrobacillus ferrooxidans (strain ATCC 23270)).